The chain runs to 62 residues: MRCVVLFMVSCLLIVLLINHFEEVEAQKWNKCFLRDIFPGKCEHDANAKLRCKEDDAKKTLA.

The N-terminal stretch at M1–A26 is a signal peptide. A disulfide bond links C42 and C52.

Belongs to the DEFL family.

The protein resides in the secreted. In terms of biological role, truncated and inactivated form of SCRA, a protein involved in male-mediated self-incompatibility when active. Most A.thaliana cultivars contain such an inactive form and thus, are self-fertiles. The polypeptide is Defensin-like protein A (SCRA) (Arabidopsis thaliana (Mouse-ear cress)).